Here is a 283-residue protein sequence, read N- to C-terminus: Nucleoid occlusion protein (283 aa).

A disordered region spans residues 1-26; sequence MKQPFSRLFGFGDKQDQEMETGKQEE. Over residues 13 to 26 the composition is skewed to basic and acidic residues; that stretch reads DKQDQEMETGKQEE. The H-T-H motif DNA-binding region spans 143–162; sequence ESLAQRLGKGQSTIANKLRL.

Belongs to the ParB family.

It is found in the cytoplasm. The protein resides in the nucleoid. Effects nucleoid occlusion by binding relatively nonspecifically to DNA and preventing the assembly of the division machinery in the vicinity of the nucleoid, especially under conditions that disturb the cell cycle. It helps to coordinate cell division and chromosome segregation by preventing the formation of the Z ring through the nucleoid, which would cause chromosome breakage. This is Nucleoid occlusion protein from Halalkalibacterium halodurans (strain ATCC BAA-125 / DSM 18197 / FERM 7344 / JCM 9153 / C-125) (Bacillus halodurans).